The sequence spans 1265 residues: Kinesin-like protein Klp98A (1265 aa).

One can recognise a Kinesin motor domain in the interval 3–364 (SLKVAVRVRP…LRYANRAKNI (362 aa)). 100-107 (GQTGSGKT) contacts ATP. Disordered regions lie at residues 597 to 621 (GASP…DPEL), 828 to 864 (EAES…DVSK), and 884 to 954 (VSSP…CTPS). Coiled-coil stretches lie at residues 619–670 (PELQ…EEMD) and 768–848 (AQFI…LGNK). Polar residues-rich tracts occupy residues 846–857 (GNKSMSTSTSTN), 884–901 (VSSP…SNCS), and 917–927 (SGSSEETSRTC). The segment covering 933–946 (SGSGSGSVGIGGSG) has biased composition (gly residues). Residues 1035-1071 (DLNKAQLDEHIADLQDLQRRYIQMEQEMLQSVQDLEA) adopt a coiled-coil conformation. The region spanning 1129 to 1259 (GEHFITIPSF…SFFKKGLFEN (131 aa)) is the PX domain.

This sequence belongs to the TRAFAC class myosin-kinesin ATPase superfamily. Kinesin family. As to quaternary structure, interacts with Atg8a and Rab14.

It localises to the early endosome. In terms of biological role, plus end-directed motor protein involved in asymmetric cell division of sensory organ precursor (SOP) cells by playing a role in the asymmetric localization of Sara-expressing endosomes to the pIIa daughter cell but not to the pIIb cell. Targets Sara-expressing endosomes to the central spindle which is symmetrically arranged in early cell division. During late cytokinesis, central spindle asymmetry is generated by enrichment of Patronin on the pIIb side which protects microtubules from depolymerization by Klp10A while unprotected microtubules on the pIIa side are disassembled by Klp10A, leading to the asymmetric delivery of Sara-expressing endosomes to the pIIa daughter cell. Also plays a role in regulation of autophagosome formation, fusion and positioning and is required for normal localization of Rab14. The protein is Kinesin-like protein Klp98A of Drosophila melanogaster (Fruit fly).